Consider the following 276-residue polypeptide: Acyl-[acyl-carrier-protein]--UDP-N-acetylglucosamine O-acyltransferase (276 aa).

Belongs to the transferase hexapeptide repeat family. LpxA subfamily. In terms of assembly, homotrimer.

Its subcellular location is the cytoplasm. The catalysed reaction is a (3R)-hydroxyacyl-[ACP] + UDP-N-acetyl-alpha-D-glucosamine = a UDP-3-O-[(3R)-3-hydroxyacyl]-N-acetyl-alpha-D-glucosamine + holo-[ACP]. Its pathway is glycolipid biosynthesis; lipid IV(A) biosynthesis; lipid IV(A) from (3R)-3-hydroxytetradecanoyl-[acyl-carrier-protein] and UDP-N-acetyl-alpha-D-glucosamine: step 1/6. Functionally, involved in the biosynthesis of lipid A, a phosphorylated glycolipid that anchors the lipopolysaccharide to the outer membrane of the cell. The chain is Acyl-[acyl-carrier-protein]--UDP-N-acetylglucosamine O-acyltransferase from Gloeothece citriformis (strain PCC 7424) (Cyanothece sp. (strain PCC 7424)).